The sequence spans 253 residues: Small ribosomal subunit protein uS5 (253 aa).

Positions 1 to 30 (MAESAPRGFGRGGRGGRGRGRGRRGAKRDE) are disordered. The span at 14-26 (RGGRGRGRGRRGA) shows a compositional bias: basic residues. The 64-residue stretch at 75 to 138 (LNDEVMKVVP…IMGKLSIMPI (64 aa)) folds into the S5 DRBM domain.

This sequence belongs to the universal ribosomal protein uS5 family. Component of the small ribosomal subunit (SSU). Mature yeast ribosomes consist of a small (40S) and a large (60S) subunit. The 40S small subunit contains 1 molecule of ribosomal RNA (18S rRNA) and at least 33 different proteins. The large 60S subunit contains 3 rRNA molecules (25S, 5.8S and 5S rRNA) and at least 46 different proteins. Interacts with snoRNA U3. Interacts with MPP10. Component of the ribosomal small subunit (SSU) processome composed of at least 40 protein subunits and snoRNA U3.

Its subcellular location is the cytoplasm. Its function is as follows. Component of the ribosome, a large ribonucleoprotein complex responsible for the synthesis of proteins in the cell. The small ribosomal subunit (SSU) binds messenger RNAs (mRNAs) and translates the encoded message by selecting cognate aminoacyl-transfer RNA (tRNA) molecules. The large subunit (LSU) contains the ribosomal catalytic site termed the peptidyl transferase center (PTC), which catalyzes the formation of peptide bonds, thereby polymerizing the amino acids delivered by tRNAs into a polypeptide chain. The nascent polypeptides leave the ribosome through a tunnel in the LSU and interact with protein factors that function in enzymatic processing, targeting, and the membrane insertion of nascent chains at the exit of the ribosomal tunnel. Plays a role in the assembly and function of the 40S ribosomal subunit. Mutations in this protein affects the control of translational fidelity. Involved in nucleolar processing of pre-18S ribosomal RNA and ribosome assembly. In terms of biological role, component of the ribosome, a large ribonucleoprotein complex responsible for the synthesis of proteins in the cell. The small ribosomal subunit (SSU) binds messenger RNAs (mRNAs) and translates the encoded message by selecting cognate aminoacyl-transfer RNA (tRNA) molecules. The large subunit (LSU) contains the ribosomal catalytic site termed the peptidyl transferase center (PTC), which catalyzes the formation of peptide bonds, thereby polymerizing the amino acids delivered by tRNAs into a polypeptide chain. The nascent polypeptides leave the ribosome through a tunnel in the LSU and interact with protein factors that function in enzymatic processing, targeting, and the membrane insertion of nascent chains at the exit of the ribosomal tunnel. uS5 is important for the assembly and function of the 40S ribosomal subunit. Mutations in this protein affects the control of translational fidelity. Involved in nucleolar processing of pre-18S ribosomal RNA and ribosome assembly. The sequence is that of Small ribosomal subunit protein uS5 (rps2) from Schizosaccharomyces pombe (strain 972 / ATCC 24843) (Fission yeast).